A 201-amino-acid chain; its full sequence is Large ribosomal subunit protein uL4 (201 aa).

The interval arginine 44–glycine 71 is disordered.

Belongs to the universal ribosomal protein uL4 family. As to quaternary structure, part of the 50S ribosomal subunit.

In terms of biological role, one of the primary rRNA binding proteins, this protein initially binds near the 5'-end of the 23S rRNA. It is important during the early stages of 50S assembly. It makes multiple contacts with different domains of the 23S rRNA in the assembled 50S subunit and ribosome. Its function is as follows. Forms part of the polypeptide exit tunnel. In Pectobacterium carotovorum subsp. carotovorum (strain PC1), this protein is Large ribosomal subunit protein uL4.